Reading from the N-terminus, the 116-residue chain is MLFKQAILVATTLTTLAVATPVVDVRRRTDPASSCSTGTLNCCNSSGTVEDKTIAGLLGILNIVVSDITALVGITCTPITVVGAGGTSCTSQTLCCDNNNFSGLITLGCIPININL.

The first 19 residues, 1-19, serve as a signal peptide directing secretion; that stretch reads MLFKQAILVATTLTTLAVA. Intrachain disulfides connect Cys35–Cys95, Cys42–Cys89, Cys43–Cys76, and Cys96–Cys109. 2 N-linked (GlcNAc...) asparagine glycosylation sites follow: Asn44 and Asn100.

It belongs to the fungal hydrophobin family. Self-assembles to form functional amyloid fibrils called rodlets. Self-assembly into fibrillar rodlets occurs spontaneously at hydrophobic:hydrophilic interfaces and the rodlets further associate laterally to form amphipathic monolayers.

It is found in the secreted. Its subcellular location is the cell wall. Aerial growth, conidiation, and dispersal of filamentous fungi in the environment rely upon a capability of their secreting small amphipathic proteins called hydrophobins (HPBs) with low sequence identity. Class I can self-assemble into an outermost layer of rodlet bundles on aerial cell surfaces, conferring cellular hydrophobicity that supports fungal growth, development and dispersal; whereas Class II form highly ordered films at water-air interfaces through intermolecular interactions but contribute nothing to the rodlet structure. This is Class I hydrophobin 1 from Pleurotus ostreatus (strain PC15) (Oyster mushroom).